Here is a 239-residue protein sequence, read N- to C-terminus: NAD-dependent protein deacylase (239 aa).

Residues 1–234 (MENLNIVTLT…KKVYDYLREK (234 aa)) form the Deacetylase sirtuin-type domain. NAD(+)-binding positions include 11 to 30 (GAGI…DGLW) and 89 to 92 (QNVD). Histidine 107 (proton acceptor) is an active-site residue. Zn(2+) contacts are provided by cysteine 115, cysteine 118, cysteine 136, and cysteine 139. NAD(+) contacts are provided by residues 176-178 (GTS), 202-204 (NPE), and alanine 220.

This sequence belongs to the sirtuin family. Class III subfamily. It depends on Zn(2+) as a cofactor.

Its subcellular location is the cytoplasm. It carries out the reaction N(6)-acetyl-L-lysyl-[protein] + NAD(+) + H2O = 2''-O-acetyl-ADP-D-ribose + nicotinamide + L-lysyl-[protein]. Functionally, NAD-dependent protein deacetylase which modulates the activities of several proteins which are inactive in their acetylated form. The protein is NAD-dependent protein deacylase of Aquifex aeolicus (strain VF5).